A 417-amino-acid chain; its full sequence is Secreted aspartic protease 4 (417 aa).

Residues Met1–Ala18 form the signal peptide. Residues Ala19 to Arg75 constitute a propeptide, activation peptide. The region spanning Tyr89 to Ala403 is the Peptidase A1 domain. Asp107 is an active-site residue. Asp107–Gly109 contacts pepstatin A. A disulfide bridge links Cys122 with Cys134. Asn137 carries N-linked (GlcNAc...) asparagine glycosylation. Ala160–Asp161 contributes to the pepstatin A binding site. Asp267 is a Zn(2+) binding site. Asp293 is an active-site residue. Asp293–Thr297 contributes to the pepstatin A binding site. Cysteines 331 and 369 form a disulfide.

This sequence belongs to the peptidase A1 family. Monomer.

Its subcellular location is the secreted. It catalyses the reaction Preferential cleavage at the carboxyl of hydrophobic amino acids, but fails to cleave 15-Leu-|-Tyr-16, 16-Tyr-|-Leu-17 and 24-Phe-|-Phe-25 of insulin B chain. Activates trypsinogen, and degrades keratin.. With respect to regulation, activity is inhibited by squash aspartic peptidase inhibitor (SQAPI). Secreted aspartic peptidases (SAPs) are a group of ten acidic hydrolases considered as key virulence factors. These enzymes supply the fungus with nutrient amino acids as well as are able to degrade the selected host's proteins involved in the immune defense. Moreover, acts toward human hemoglobin though limited proteolysis to generate a variety of antimicrobial hemocidins, enabling to compete with the other microorganisms of the same physiological niche using the microbicidal peptides generated from the host protein. Its function is as follows. Plays a key role in defense against host by cleaving histatin-5 (Hst 5), a peptide from human saliva that carries out fungicidal activity. The cleavage rate decreases in an order of SAP2 &gt; SAP9 &gt; SAP3 &gt; SAP7 &gt; SAP4 &gt; SAP1 &gt; SAP8. The first cleavage occurs between residues 'Lys-17' and 'His-18' of Hst 5, giving DSHAKRHHGYKRKFHEK and HHSHRGY peptides. Simultaneously, the DSHAKRHHGY and KRKFHEKHHSHRGY peptides are also formed. The chain is Secreted aspartic protease 4 from Candida albicans (strain SC5314 / ATCC MYA-2876) (Yeast).